Consider the following 224-residue polypeptide: V-type ATP synthase subunit D (224 aa).

The span at alanine 205–isoleucine 214 shows a compositional bias: basic and acidic residues. The segment at alanine 205–aspartate 224 is disordered. The segment covering glutamine 215 to aspartate 224 has biased composition (polar residues).

This sequence belongs to the V-ATPase D subunit family.

Its function is as follows. Produces ATP from ADP in the presence of a proton gradient across the membrane. In Deinococcus deserti (strain DSM 17065 / CIP 109153 / LMG 22923 / VCD115), this protein is V-type ATP synthase subunit D.